A 108-amino-acid polypeptide reads, in one-letter code: Protein SMALL AUXIN UP-REGULATED RNA 51 (108 aa).

Belongs to the ARG7 family. In terms of tissue distribution, expressed in organ primordia. Hardly observed in leaves.

It is found in the cell membrane. In terms of biological role, provide a mechanistic link between auxin and plasma membrane H(+)-ATPases (PM H(+)-ATPases, e.g. AHA1 and AHA2), and triggers PM H(+)-ATPases activity by promoting phosphorylation of their C-terminal autoinhibitory domain as a result of PP2C-D subfamily of type 2C phosphatases inhibition, thus leading to the acidification of the apoplast and the facilitation of solutes and water uptake to drive cell expansion. Triggers plant growth probably by promoting cell elongation. Regulates branch angles and bending. The sequence is that of Protein SMALL AUXIN UP-REGULATED RNA 51 from Arabidopsis thaliana (Mouse-ear cress).